The sequence spans 161 residues: 3-hydroxyacyl-[acyl-carrier-protein] dehydratase FabZ (161 aa).

His-66 is an active-site residue.

The protein belongs to the thioester dehydratase family. FabZ subfamily.

The protein resides in the cytoplasm. The enzyme catalyses a (3R)-hydroxyacyl-[ACP] = a (2E)-enoyl-[ACP] + H2O. Functionally, involved in unsaturated fatty acids biosynthesis. Catalyzes the dehydration of short chain beta-hydroxyacyl-ACPs and long chain saturated and unsaturated beta-hydroxyacyl-ACPs. The chain is 3-hydroxyacyl-[acyl-carrier-protein] dehydratase FabZ from Gluconacetobacter diazotrophicus (strain ATCC 49037 / DSM 5601 / CCUG 37298 / CIP 103539 / LMG 7603 / PAl5).